A 377-amino-acid chain; its full sequence is Carboxynorspermidine/carboxyspermidine decarboxylase (377 aa).

Residue K41 is modified to N6-(pyridoxal phosphate)lysine. Residues E238 and D274 each contribute to the substrate site.

This sequence belongs to the Orn/Lys/Arg decarboxylase class-II family. NspC subfamily. Homodimer. Pyridoxal 5'-phosphate is required as a cofactor.

The protein resides in the cytoplasm. It carries out the reaction carboxynorspermidine + H(+) = norspermidine + CO2. It catalyses the reaction carboxyspermidine + H(+) = spermidine + CO2. Its activity is regulated as follows. Dithiothreitol greatly stimulates activity, maximum stimulation being at 5-20 mM dithiothreitol concentration. Fe(3+), Fe(2+) and Mn(2+) severely inhibit activity (88%, 82% and 50%, respectively), whereas Zn(2+) has a slightly inhibitory effect (23%) and Mg(2+), Ca(2+), Cu(2+) and Cu(+) have no effect. Catalyzes the decarboxylation of carboxynorspermidine and carboxyspermidine. 2,3-diaminopropionic acid, 2,4-diaminobutyric acid, L-ornithine or L-lysine cannot serve as substrates. The polypeptide is Carboxynorspermidine/carboxyspermidine decarboxylase (Vibrio alginolyticus).